The following is a 125-amino-acid chain: Protein Bouncer (125 aa).

Positions 1 to 18 are cleaved as a signal peptide; that stretch reads MGCVLLFLLLVCVPVVLP. 5 disulfide bridges follow: Cys23–Cys48, Cys26–Cys35, Cys42–Cys66, Cys72–Cys91, and Cys92–Cys97. Positions 23–98 constitute a UPAR/Ly6 domain; that stretch reads CLFCPVTSLN…FSCCGGHYCN (76 aa). Asn32 carries N-linked (GlcNAc...) asparagine glycosylation. Residue Asn84 is glycosylated (N-linked (GlcNAc...) asparagine). A lipid anchor (GPI-anchor amidated asparagine) is attached at Asn98. The propeptide at 99-125 is removed in mature form; it reads SQPRAEPGGRLLLLLLPAAALTAAGAL.

It belongs to the SPACA4/bouncer family. Interacts with spermatocyte complex composed of izumo1, spaca6 and tmem81. Post-translationally, N-glycosylated. As to expression, highly expressed in oocytes. Not expressed in testis.

It localises to the cell membrane. Oocyte-expressed fertilization factor that mediates sperm-egg binding and is essential for sperm entry into the egg. Necessary and sufficient to mediate species-specific gamete recognition and fertilization, which is essential for vertebrate species performing external fertilization. External fertilization cannot guarantee that only conspecific sperm reaches the egg by precopulatory mate choice: proteins such as Bouncer can therefore support the selection of conspecific sperm. The sequence is that of Protein Bouncer from Danio rerio (Zebrafish).